Here is a 284-residue protein sequence, read N- to C-terminus: N-methyltransferase sirN (284 aa).

It belongs to the methyltransferase superfamily. LaeA methyltransferase family.

The protein operates within mycotoxin biosynthesis. N-methyltransferase; part of the gene cluster that mediates the biosynthesis of sirodesmin PL, an epipolythiodioxopiperazine (ETP) characterized by a disulfide bridged cyclic dipeptide and that acts as a phytotoxin which is involved in the blackleg didease of canola. SirD catalyzes the O-prenylation of L-tyrosine (L-Tyr) in the presence of dimethylallyl diphosphate (DMAPP) to yield 4-O-dimethylallyl-L-Tyr, and therefore represents probably the first pathway-specific enzyme in the biosynthesis of sirodesmin PL. 4-O-dimethylallyl-L-Tyr, then undergoes condensation with L-Ser in a reaction catalyzed by the non-ribosomal peptide synthase sirP to form the diketopiperazine (DKP) backbone. Further bishydroxylation of the DKP performed by the cytochrome P450 monooxygenase sirC leads to the production of the intermediate phomamide. This step is essential to form the reactive thiol group required for toxicity of sirodesmin PL. The next steps of sirodesmin biosynthesis are not well understood yet but some predictions could be made from intermediate compounds identification. Phomamide is converted into phomalizarine via oxidation, probably by sirT. Further oxidation, methylation (by sirM or sirN) and reduction steps convert phomalizarine to deacetyl sirodesmin. Finally, acetyltransferase sirH probably acetylates deacetyl sirodesmin to produce sirodesmin PL. The sequence is that of N-methyltransferase sirN from Leptosphaeria maculans (Blackleg fungus).